We begin with the raw amino-acid sequence, 215 residues long: Short neuropeptide F (215 aa).

A signal peptide spans 1–22; it reads MCRINFTTLSLILVLWSGSLMS. Positions 23–56 are excised as a propeptide; sequence EPSQNADGSIKGLYEYLLQREYAAPVSYADHQIK. A phenylalanine amide mark is found at F69 and F101. A Tryptophan amide modification is found at W129. F157 bears the Phenylalanine amide mark. The propeptide occupies 160-215; that stretch reads SDPSWAMFNEHQLDEQQFADATRQPSKTLRGDEPTSIESTEQVESEENSPSNMDEK. Residues 173 to 215 form a disordered region; it reads DEQQFADATRQPSKTLRGDEPTSIESTEQVESEENSPSNMDEK.

This sequence belongs to the NPY family.

It is found in the secreted. Its function is as follows. Plays a role in controlling food intake and regulating body size. The sequence is that of Short neuropeptide F from Aedes aegypti (Yellowfever mosquito).